Reading from the N-terminus, the 371-residue chain is Beta-1,3-galactosyltransferase 4 (371 aa).

Topologically, residues 1–4 are cytoplasmic; sequence MPLS. Residues 5-25 form a helical; Signal-anchor for type II membrane protein membrane-spanning segment; sequence LFRRLLLAVLLLVIIWTLFGP. Over 26–371 the chain is Lumenal; that stretch reads SGLGEELLSL…RCRFIAWLNS (346 aa). Asn143 is a glycosylation site (N-linked (GlcNAc...) asparagine). The segment at 187-208 is disordered; sequence GGPSEQWQKGKEPQEETTAVHK. Positions 194–207 are enriched in basic and acidic residues; sequence QKGKEPQEETTAVH.

It belongs to the glycosyltransferase 31 family. In terms of tissue distribution, highly expressed in thymus, spleen, kidney and testis and, to a lesser extent, in brain and liver.

Its subcellular location is the golgi apparatus membrane. It catalyses the reaction a ganglioside GM2 (d18:1(4E)) + UDP-alpha-D-galactose = a ganglioside GM1 (d18:1(4E)) + UDP + H(+). The catalysed reaction is a ganglioside GM2 + UDP-alpha-D-galactose = a ganglioside GM1 + UDP + H(+). The enzyme catalyses a ganglioside GD2 (d18:1(4E)) + UDP-alpha-D-galactose = a ganglioside GD1b (d18:1(4E)) + UDP + H(+). It carries out the reaction a ganglioside GA2 (d18:1(4E)) + UDP-alpha-D-galactose = a ganglioside GA1 (d18:1(4E)) + UDP + H(+). It functions in the pathway protein modification; protein glycosylation. Involved in GM1/GD1B/GA1 ganglioside biosynthesis. The chain is Beta-1,3-galactosyltransferase 4 (B3galt4) from Rattus norvegicus (Rat).